Consider the following 236-residue polypeptide: Baculoviral IAP repeat-containing protein 8 (236 aa).

The BIR repeat unit spans residues 7 to 70 (RLITFGTWMY…KWYPGCKYLL (64 aa)). Residues cysteine 39, cysteine 42, histidine 59, and cysteine 66 each coordinate Zn(2+). An RING-type zinc finger spans residues 189-224 (CKICMDRHIAVVFIPCGHLVTCKQCAEAVDRCPMCS).

Belongs to the IAP family. As to quaternary structure, binds to caspase-9. In terms of tissue distribution, testis specific in normal tissues.

The protein resides in the cytoplasm. Its function is as follows. Protects against apoptosis mediated by BAX. The polypeptide is Baculoviral IAP repeat-containing protein 8 (BIRC8) (Homo sapiens (Human)).